A 474-amino-acid chain; its full sequence is tRNA-2-methylthio-N(6)-dimethylallyladenosine synthase (474 aa).

The region spanning 3-120 (QKLHIKTWGC…LPEMINQIRG (118 aa)) is the MTTase N-terminal domain. [4Fe-4S] cluster is bound by residues Cys-12, Cys-49, Cys-83, Cys-157, Cys-161, and Cys-164. Residues 143–375 (RAEGPTAFVS…QQRINNQAAQ (233 aa)) enclose the Radical SAM core domain. Positions 378 to 441 (RAMLGTEQRV…TNSLRGEVVR (64 aa)) constitute a TRAM domain.

It belongs to the methylthiotransferase family. MiaB subfamily. Monomer. [4Fe-4S] cluster serves as cofactor.

The protein resides in the cytoplasm. It catalyses the reaction N(6)-dimethylallyladenosine(37) in tRNA + (sulfur carrier)-SH + AH2 + 2 S-adenosyl-L-methionine = 2-methylsulfanyl-N(6)-dimethylallyladenosine(37) in tRNA + (sulfur carrier)-H + 5'-deoxyadenosine + L-methionine + A + S-adenosyl-L-homocysteine + 2 H(+). Functionally, catalyzes the methylthiolation of N6-(dimethylallyl)adenosine (i(6)A), leading to the formation of 2-methylthio-N6-(dimethylallyl)adenosine (ms(2)i(6)A) at position 37 in tRNAs that read codons beginning with uridine. This is tRNA-2-methylthio-N(6)-dimethylallyladenosine synthase from Pasteurella multocida (strain Pm70).